The following is a 301-amino-acid chain: Coiled-coil domain-containing protein 69-B (301 aa).

The segment at 1–43 (MGSKTSKMCCPQLRKKKRQKAHKEGPSSQELNDLNAKSQGPNE) is disordered. A lipid anchor (N-myristoyl glycine) is attached at Gly-2. The span at 26–41 (PSSQELNDLNAKSQGP) shows a compositional bias: polar residues. 2 coiled-coil regions span residues 42-167 (NELL…SILS) and 213-281 (KSTM…NLYR).

This sequence belongs to the CCDC69 family.

It localises to the cytoplasm. The protein resides in the cytoskeleton. It is found in the spindle. The protein localises to the midbody. Its function is as follows. May act as a scaffold to regulate the recruitment and assembly of spindle midzone components. The polypeptide is Coiled-coil domain-containing protein 69-B (ccdc69-b) (Xenopus laevis (African clawed frog)).